A 307-amino-acid chain; its full sequence is ATP-dependent (S)-NAD(P)H-hydrate dehydratase (307 aa).

The YjeF C-terminal domain maps to 1-291 (MDHFLKLLPK…DEIPKLVRDV (291 aa)). (6S)-NADPHX-binding positions include Gly-96 and 150–156 (NIVEFSR). Residues 194–198 (KGEVD) and 214–223 (SSLRRCGGQG) contribute to the ATP site. Residue Asp-224 participates in (6S)-NADPHX binding.

It belongs to the NnrD/CARKD family. The cofactor is Mg(2+).

The catalysed reaction is (6S)-NADHX + ATP = ADP + phosphate + NADH + H(+). It carries out the reaction (6S)-NADPHX + ATP = ADP + phosphate + NADPH + H(+). Functionally, catalyzes the dehydration of the S-form of NAD(P)HX at the expense of ATP, which is converted to ADP. Together with NAD(P)HX epimerase, which catalyzes the epimerization of the S- and R-forms, the enzyme allows the repair of both epimers of NAD(P)HX, a damaged form of NAD(P)H that is a result of enzymatic or heat-dependent hydration. This chain is ATP-dependent (S)-NAD(P)H-hydrate dehydratase, found in Caenorhabditis briggsae.